Consider the following 306-residue polypeptide: Polyphosphate kinase PPK2B (306 aa).

The protein belongs to the polyphosphate kinase 2 (PPK2) family. Class I subfamily. Homotetramer. Mn(2+) serves as cofactor.

It catalyses the reaction [phosphate](n) + ATP = [phosphate](n+1) + ADP. It carries out the reaction [phosphate](n) + GTP = [phosphate](n+1) + GDP. Its function is as follows. Catalyzes the synthesis of polyP from ATP or GTP. Can also use inorganic polyphosphate (polyP) as a donor to convert ADP to ATP, but the activity is 10-fold higher in vitro for polyP synthesis than for ATP formation. The chain is Polyphosphate kinase PPK2B from Corynebacterium glutamicum (strain ATCC 13032 / DSM 20300 / JCM 1318 / BCRC 11384 / CCUG 27702 / LMG 3730 / NBRC 12168 / NCIMB 10025 / NRRL B-2784 / 534).